The sequence spans 281 residues: NADPH-dependent 7-cyano-7-deazaguanine reductase (281 aa).

86–88 (IES) is a binding site for substrate. 88–89 (SK) is an NADPH binding site. Cysteine 189 functions as the Thioimide intermediate in the catalytic mechanism. Residue aspartate 196 is the Proton donor of the active site. Position 228–229 (228–229 (HE)) interacts with substrate. Residue 257–258 (RG) coordinates NADPH.

The protein belongs to the GTP cyclohydrolase I family. QueF type 2 subfamily. Homodimer.

The protein resides in the cytoplasm. The catalysed reaction is 7-aminomethyl-7-carbaguanine + 2 NADP(+) = 7-cyano-7-deazaguanine + 2 NADPH + 3 H(+). Its pathway is tRNA modification; tRNA-queuosine biosynthesis. Functionally, catalyzes the NADPH-dependent reduction of 7-cyano-7-deazaguanine (preQ0) to 7-aminomethyl-7-deazaguanine (preQ1). The protein is NADPH-dependent 7-cyano-7-deazaguanine reductase of Mannheimia succiniciproducens (strain KCTC 0769BP / MBEL55E).